Here is a 475-residue protein sequence, read N- to C-terminus: 3-isopropylmalate dehydratase large subunit (475 aa).

[4Fe-4S] cluster is bound by residues cysteine 347, cysteine 407, and cysteine 410. Positions 418–442 (LAPGERSASTSNRNFEGRQGKGGRT) are disordered.

It belongs to the aconitase/IPM isomerase family. LeuC type 1 subfamily. As to quaternary structure, heterodimer of LeuC and LeuD. [4Fe-4S] cluster is required as a cofactor.

The enzyme catalyses (2R,3S)-3-isopropylmalate = (2S)-2-isopropylmalate. It functions in the pathway amino-acid biosynthesis; L-leucine biosynthesis; L-leucine from 3-methyl-2-oxobutanoate: step 2/4. In terms of biological role, catalyzes the isomerization between 2-isopropylmalate and 3-isopropylmalate, via the formation of 2-isopropylmaleate. The protein is 3-isopropylmalate dehydratase large subunit of Streptomyces griseus subsp. griseus (strain JCM 4626 / CBS 651.72 / NBRC 13350 / KCC S-0626 / ISP 5235).